We begin with the raw amino-acid sequence, 686 residues long: Lysophospholipase 3 (686 aa).

A signal peptide spans 1 to 26 (MIRPLCSKIIISYIFAISQFLLAANA). The 554-residue stretch at 39–592 (SCPDDINLVR…KNYCWNGTLD (554 aa)) folds into the PLA2c domain. Residues Asn56, Asn82, Asn129, Asn166, Asn221, Asn283, Asn313, Asn351, Asn495, Asn519, Asn547, Asn571, Asn588, and Asn614 are each glycosylated (N-linked (GlcNAc...) asparagine). Residue Asn659 is the site of GPI-anchor amidated asparagine attachment. Positions 660 to 686 (SGSHLSGISVKFSAMIMLTLLMFTGAV) are cleaved as a propeptide — removed in mature form.

This sequence belongs to the lysophospholipase family.

The protein resides in the cell membrane. The enzyme catalyses a 1-acyl-sn-glycero-3-phosphocholine + H2O = sn-glycerol 3-phosphocholine + a fatty acid + H(+). Its function is as follows. Sequentially removes both fatty acyl groups from diacylglycerophospholipids and therefore has both phospholipase A and lysophospholipase activities. Substrate preference is phosphatidylserine &gt; phosphatidylinositol. Does not cleave phosphatidylcholine, phosphatidylethanolamine, phosphatidic acid and phosphatidylinositol-bisphosphate. Mainly responsible for the degradation of phosphatidylinositol in vivo. This chain is Lysophospholipase 3 (PLB3), found in Saccharomyces cerevisiae (strain ATCC 204508 / S288c) (Baker's yeast).